We begin with the raw amino-acid sequence, 101 residues long: Long chronological lifespan protein 1 (101 aa).

Positions 1–17 (MKNAALCEALPLLATCS) are cleaved as a signal peptide. A lipid anchor (GPI-anchor amidated serine) is attached at S81. Residues 82–101 (FAKPSFSFFFFLLTSLLSPF) constitute a propeptide, removed in mature form.

It is found in the cell membrane. In Saccharomyces cerevisiae (strain ATCC 204508 / S288c) (Baker's yeast), this protein is Long chronological lifespan protein 1 (LCL1).